We begin with the raw amino-acid sequence, 1744 residues long: Probable disease resistance protein At4g19520 (1744 aa).

The region spanning 3–163 (DGKEVYISFN…KIVADVRQKL (161 aa)) is the TIR 1 domain. The active site involves glutamate 80. The 220-residue stretch at 192–411 (SLGIWGMAGI…VSEKEIFLDI (220 aa)) folds into the NB-ARC domain. LRR repeat units follow at residues 503-526 (YEDVKAINLDTSNLPFKGHIAFQH), 557-581 (PPELRLLHWTCYPLHSFPQNFGFQY), 583-602 (VELNMPCSKLKKLWGGTKNL), 603-626 (EVLKRITLSCSVQLLNVDELQYSP), 648-669 (LQHLRIVDLSTCKKIKSFPKVP), 670-692 (PSIRKLHLQGTGIRDLSSLNHSS), 710-733 (DHRKQVLKLKDSSHLGSLPDIVIF), 734-754 (ESLEVLDFSGCSELEDIQGFP), 755-777 (QNLKRLYLAKTAIKEVPSSLCHH), 779-802 (SKLVKLDMENCERLRDLPMGMSNM), 804-823 (YLAVLKLSGCSNLENIKELP), 824-846 (RNLKELYLAGTAVKEFPSTLLET), 848-871 (SEVVLLDLENCKKLQGLPTGMSKL), 892-915 (PLNLIELYLAGTAIRELPPSIGDL), 917-939 (LLDTLDLKNCNRLRHLPMEMHNL), 941-963 (PLKVLDLSNCSELEVFTSSLPKV), 987-1010 (YEHRVTLSLYKARLQYIPEEIRWM), 1011-1035 (PSLKTLDLSRNGFTEVPVSIKDFSK), 1037-1059 (LSLRLRYCENLRSLPQLPRSLQL), and 1062-1086 (AHGCSSLQLITPDFKQLPRYYTFSN). Residues 1399–1559 (RNNDVFVSFH…KVANDIRKKL (161 aa)) enclose the TIR 2 domain.

Belongs to the disease resistance TIR-NB-LRR family.

The catalysed reaction is NAD(+) + H2O = ADP-D-ribose + nicotinamide + H(+). Its function is as follows. Probable disease resistance protein. In Arabidopsis thaliana (Mouse-ear cress), this protein is Probable disease resistance protein At4g19520.